A 222-amino-acid chain; its full sequence is Cytochrome b6 (222 aa).

Residues 39-59 (IFYCLGGITLTCFLIQFATGF) traverse the membrane as a helical segment. Position 42 (cysteine 42) interacts with heme c. Histidine 93 and histidine 107 together coordinate heme b. The next 3 helical transmembrane spans lie at 97-117 (ASMMVLMMILHVFRVYLTGGF), 123-143 (LTWVTGVVLAVITVSFGVTGY), and 193-213 (LHTFVLPWLIAVFMLLHFLMI). Positions 194 and 209 each coordinate heme b.

It belongs to the cytochrome b family. PetB subfamily. As to quaternary structure, the 4 large subunits of the cytochrome b6-f complex are cytochrome b6, subunit IV (17 kDa polypeptide, PetD), cytochrome f and the Rieske protein, while the 4 small subunits are PetG, PetL, PetM and PetN. The complex functions as a dimer. Heme b is required as a cofactor. Heme c serves as cofactor.

It is found in the cellular thylakoid membrane. In terms of biological role, component of the cytochrome b6-f complex, which mediates electron transfer between photosystem II (PSII) and photosystem I (PSI), cyclic electron flow around PSI, and state transitions. In Cyanothece sp. (strain PCC 7425 / ATCC 29141), this protein is Cytochrome b6.